The following is a 1080-amino-acid chain: Protein transport protein SEC24 C (1080 aa).

A compositionally biased stretch (pro residues) spans 1–10 (MVAPVPPGAP). 3 disordered regions span residues 1–189 (MVAP…SGMI), 201–220 (GSGGFPRGTQFPGAAVTTPQ), and 316–367 (TAMG…SDYV). A compositionally biased stretch (polar residues) spans 12-43 (PNSQQNSGPPNFYPGSQGNSNALADNMQNLSL). Positions 45–70 (RPPPMMPGSGPRPPPPFGQSPQPFPQ) are enriched in pro residues. Low complexity-rich tracts occupy residues 71–84 (QSPSYGAPQRGPSP), 142–160 (PAASSSGFPAFGPSGSVAA), and 178–189 (GSGMSMPPSGMI). A compositionally biased stretch (polar residues) spans 340-356 (GSSSSPTVFETRQSNQA). Zn(2+) is bound by residues cysteine 430, cysteine 433, cysteine 452, and cysteine 455. Positions 430–455 (CSRCKGYINPFMKFIDQGRKFICNFC) are zinc finger-like.

The protein belongs to the SEC23/SEC24 family. SEC24 subfamily. As to quaternary structure, component of the coat protein complex II (COPII), composed of at least five proteins: the Sec23/24 complex, the Sec13/31 complex and Sar1. In terms of tissue distribution, mainly expressed at low levels in pollen, leaves, roots and stems.

It localises to the cytoplasmic vesicle. The protein resides in the COPII-coated vesicle membrane. The protein localises to the endoplasmic reticulum membrane. Its subcellular location is the golgi apparatus membrane. In terms of biological role, component of the coat protein complex II (COPII), that covers ER-derived vesicles involved in transport from the endoplasmic reticulum to the Golgi apparatus. COPII is composed of at least five proteins: the SEC23/24 complex, the SEC13/31 complex, and the protein SAR1. Acts in the cytoplasm to promote the transport of secretory, plasma membrane, and vacuolar proteins from the endoplasmic reticulum to the Golgi complex. The polypeptide is Protein transport protein SEC24 C (Arabidopsis thaliana (Mouse-ear cress)).